A 331-amino-acid polypeptide reads, in one-letter code: tRNA-cytidine(32) 2-sulfurtransferase (331 aa).

Positions 1–33 (MNAPHMNDTAADAATLDDAAAPAGRPALTRREQ) are disordered. A compositionally biased stretch (low complexity) spans 8–23 (DTAADAATLDDAAAPA). Positions 71 to 76 (SGGKDS) match the PP-loop motif motif. The [4Fe-4S] cluster site is built by cysteine 146, cysteine 149, and cysteine 237.

This sequence belongs to the TtcA family. In terms of assembly, homodimer. Mg(2+) serves as cofactor. The cofactor is [4Fe-4S] cluster.

The protein resides in the cytoplasm. The catalysed reaction is cytidine(32) in tRNA + S-sulfanyl-L-cysteinyl-[cysteine desulfurase] + AH2 + ATP = 2-thiocytidine(32) in tRNA + L-cysteinyl-[cysteine desulfurase] + A + AMP + diphosphate + H(+). It functions in the pathway tRNA modification. Its function is as follows. Catalyzes the ATP-dependent 2-thiolation of cytidine in position 32 of tRNA, to form 2-thiocytidine (s(2)C32). The sulfur atoms are provided by the cysteine/cysteine desulfurase (IscS) system. The sequence is that of tRNA-cytidine(32) 2-sulfurtransferase from Burkholderia orbicola (strain MC0-3).